We begin with the raw amino-acid sequence, 426 residues long: MIGCAKPLAAPLQAWARPPSPAGRRLPPSFCAPDTSPALTRAVESPGQSQSDDAPPPRSGEAASSLAPRASSHLDRWSRSRALRSGHRPALNRAALSSASVSAPPVIKSPRPEDAAVAAEDGEDDDVCEAERDAAAGKAIYIVSDGTGWTAEHSVNAALGQFENCLADRGCAVNTHLFSLIDDMDRLIEVIKQAAKEGALVLYTLADPSMAEATKKACDFWGVPCTDVLRPTVEAIASHIGVAPSGIPRSFPSRNGRLSEDYFQRIDAIDFTIKQDDGVLPQNFYRADIVLAGVSRTGKTPLSIYLAQKGYKVANVPIVMGVALPKSLFEINQDKVFGLTINPAILQGIRKTRAKTLGFDGRQSNYAEMDHVRQELVHANQIFVQNPWWPVIAVTGKAIEETAAVILGILHDRKQKCSMPRISKRY.

Residues 1–41 (MIGCAKPLAAPLQAWARPPSPAGRRLPPSFCAPDTSPALTR) constitute a chloroplast transit peptide. 2 disordered regions span residues 1-76 (MIGC…HLDR) and 94-124 (AALS…DGED). Over residues 94–119 (AALSSASVSAPPVIKSPRPEDAAVAA) the composition is skewed to low complexity. An ADP-binding site is contributed by 153–160 (HSVNAALG).

This sequence belongs to the pyruvate, phosphate/water dikinase regulatory protein family. PDRP subfamily. Homodimer at pH 7.5 and homotetramer at pH 8.3. Mg(2+) serves as cofactor. As to expression, leaf mesophyll-cells.

The protein resides in the plastid. It localises to the chloroplast stroma. The catalysed reaction is N(tele)-phospho-L-histidyl/L-threonyl-[pyruvate, phosphate dikinase] + ADP = N(tele)-phospho-L-histidyl/O-phospho-L-threonyl-[pyruvate, phosphate dikinase] + AMP + H(+). It catalyses the reaction N(tele)-phospho-L-histidyl/O-phospho-L-threonyl-[pyruvate, phosphate dikinase] + phosphate + H(+) = N(tele)-phospho-L-histidyl/L-threonyl-[pyruvate, phosphate dikinase] + diphosphate. It functions in the pathway photosynthesis; C4 acid pathway. Regulated by light/dark exposure. Its function is as follows. Bifunctional serine/threonine kinase and phosphorylase involved in the dark/light-mediated regulation of PPDK by catalyzing its phosphorylation/dephosphorylation. Dark/light-induced changes in stromal concentrations of the competing ADP and Pi substrates govern the direction of the reaction. In the dark, phosphorylates the catalytic intermediate of PPDK (PPDK-HisP), inactivating it. Light exposure induces the phosphorolysis reaction that reactivates PPDK. Phosphorylates PPDK at both Ser-528 and Thr-527. Can use ADP as a high specificity substrate and GDP as a lower affinity substrate, but has no activity with UDP. This Zea mays (Maize) protein is Pyruvate, phosphate dikinase regulatory protein, chloroplastic (PDRP1).